A 102-amino-acid polypeptide reads, in one-letter code: Small ribosomal subunit protein uS10 (102 aa).

This sequence belongs to the universal ribosomal protein uS10 family. In terms of assembly, part of the 30S ribosomal subunit.

Involved in the binding of tRNA to the ribosomes. The sequence is that of Small ribosomal subunit protein uS10 from Methanosphaera stadtmanae (strain ATCC 43021 / DSM 3091 / JCM 11832 / MCB-3).